The sequence spans 210 residues: Urease accessory protein UreF (210 aa).

This sequence belongs to the UreF family. UreD, UreF and UreG form a complex that acts as a GTP-hydrolysis-dependent molecular chaperone, activating the urease apoprotein by helping to assemble the nickel containing metallocenter of UreC. The UreE protein probably delivers the nickel.

The protein resides in the cytoplasm. Required for maturation of urease via the functional incorporation of the urease nickel metallocenter. This is Urease accessory protein UreF from Dinoroseobacter shibae (strain DSM 16493 / NCIMB 14021 / DFL 12).